We begin with the raw amino-acid sequence, 527 residues long: Estrogen receptor beta (527 aa).

The modulating stretch occupies residues 1–145 (MDVKNSPSSL…SPSSKRDAHF (145 aa)). Residues S84 and S102 each carry the phosphoserine; by MAPK modification. 2 NR C4-type zinc fingers span residues 146-166 (CAVC…CEGC) and 182-206 (CPAT…LRKC). The nuclear receptor DNA-binding region spans 146 to 211 (CAVCSDYASG…RLRKCYEVGM (66 aa)). One can recognise an NR LBD domain in the interval 261–495 (SPEQLVLTLL…DLLLEMLNAH (235 aa)).

It belongs to the nuclear hormone receptor family. NR3 subfamily. As to quaternary structure, binds DNA as a homodimer. Can form a heterodimer with ESR1. Interacts with NCOA1, NCOA3, NCOA5 and NCOA6 coactivators, leading to a strong increase of transcription of target genes. Interacts with UBE1C and AKAP13. Interacts with DNTTIP2. Interacts with CCDC62 in the presence of estradiol/E2; this interaction seems to enhance the transcription of target genes. Interacts with DNAAF4. Interacts with PRMT2. Interacts with CCAR2 (via N-terminus) in a ligand-independent manner. Interacts with RBM39, in the presence of estradiol (E2). Interacts with STUB1/CHIP. In terms of processing, phosphorylation at Ser-84 and Ser-102 recruits NCOA1. Present in granulosa cells of antral follicles in various stages of follicular growth.

The protein localises to the nucleus. Its function is as follows. Nuclear hormone receptor. Binds estrogens with an affinity similar to that of ESR1ESR1/ER-alpha, and activates expression of reporter genes containing estrogen response elements (ERE) in an estrogen-dependent manner. This Bos taurus (Bovine) protein is Estrogen receptor beta (ESR2).